A 64-amino-acid chain; its full sequence is Temporin-ALg (64 aa).

An N-terminal signal peptide occupies residues methionine 1–cysteine 22. The propeptide occupies glutamate 23–arginine 46. Leucine 62 carries the post-translational modification Leucine amide.

The protein belongs to the frog skin active peptide (FSAP) family. Temporin subfamily. As to expression, expressed by the skin glands.

The protein resides in the secreted. Its function is as follows. Antimicrobial peptide with activity against Gram-positive and Gram-negative bacteria and against fungi. Has been tested against S.aureus (MIC=2.5 ug/mL), B.pumilus (MIC=2.5 ug/mL), B.cereus (MIC=30.0 ug/mL), E.coli (MIC=5.0 ug/mL), B.dysenteriae (MIC=10.0 ug/mL), A.cacoaceticus (MIC=30.0 ug/mL), P.aeruginosa (MIC=7.5 ug/mL) and C.albicans (MIC=1.25 ug/mL). Also shows a weak hemolytic activity. The sequence is that of Temporin-ALg from Amolops loloensis (Lolokou Sucker Frog).